The sequence spans 462 residues: L-seryl-tRNA(Sec) selenium transferase (462 aa).

At Lys-294 the chain carries N6-(pyridoxal phosphate)lysine.

Belongs to the SelA family. In terms of assembly, homodecamer; pentamer of dimers. Binds only one seryl-tRNA(Sec) per dimer. It depends on pyridoxal 5'-phosphate as a cofactor.

It localises to the cytoplasm. The catalysed reaction is L-seryl-tRNA(Sec) + selenophosphate + H(+) = L-selenocysteinyl-tRNA(Sec) + phosphate. It participates in aminoacyl-tRNA biosynthesis; selenocysteinyl-tRNA(Sec) biosynthesis; selenocysteinyl-tRNA(Sec) from L-seryl-tRNA(Sec) (bacterial route): step 1/1. In terms of biological role, converts seryl-tRNA(Sec) to selenocysteinyl-tRNA(Sec) required for selenoprotein biosynthesis. The sequence is that of L-seryl-tRNA(Sec) selenium transferase from Yersinia enterocolitica serotype O:8 / biotype 1B (strain NCTC 13174 / 8081).